Here is a 575-residue protein sequence, read N- to C-terminus: CCR4-NOT transcription complex subunit 4 (575 aa).

The segment at 14–57 adopts an RING-type; degenerate zinc-finger fold; that stretch reads CPLCMEPLEIDDINFFPCTCGYQICRFCWHRIRTDENGLCPACR. The stretch at 68–104 forms a coiled coil; that stretch reads KPLSQEELQRIKNEKKQKQNERKQKISENRKHLASVR. At Ser71 the chain carries Phosphoserine. The RRM domain maps to 109–189; sequence NLVFVVGLSQ…VVDGRTLKAS (81 aa). A C3H1-type zinc finger spans residues 190–217; sequence LGTTKYCSYFLKNMQCPKPDCMYLHELG. 2 disordered regions span residues 256–372 and 424–458; these read TGSV…EPQS and SVQDQPSLSPTSLQNSSSHTTTAKGPGSGFLHPAA. A compositionally biased stretch (polar residues) spans 281–299; the sequence is DSLSIGNGDNSQQISNSDT. Ser301 carries the phosphoserine modification. The segment covering 307 to 322 has biased composition (polar residues); the sequence is SKSNPVIPISSSNHSA. Ser324 carries the phosphoserine modification. Positions 345 to 356 are enriched in pro residues; that stretch reads NPIPSGLPPFPS. Positions 428-441 are enriched in low complexity; sequence QPSLSPTSLQNSSS. A Phosphoserine modification is found at Ser432. Arg475 and Arg483 each carry asymmetric dimethylarginine. At Ser490 the chain carries Phosphoserine. The residue at position 497 (Arg497) is an Asymmetric dimethylarginine. The tract at residues 553 to 575 is disordered; that stretch reads PLSTSSHSLQQGQQPTSLHTTVA.

In terms of assembly, interacts with CNOT1 via its C-terminus but does not stably associate with the CCR4-NOT complex. Interacts (via RING domain) with UBE2D2. Interacts with ABCE1, PINK1 and PELO. Autoubiquitinated.

It is found in the cytoplasm. The protein resides in the nucleus. The catalysed reaction is S-ubiquitinyl-[E2 ubiquitin-conjugating enzyme]-L-cysteine + [acceptor protein]-L-lysine = [E2 ubiquitin-conjugating enzyme]-L-cysteine + N(6)-ubiquitinyl-[acceptor protein]-L-lysine.. It functions in the pathway protein modification; protein ubiquitination. Functionally, has E3 ubiquitin ligase activity, promoting ubiquitination and degradation of target proteins. Involved in activation of the JAK/STAT pathway. Catalyzes ubiquitination of methylated RBM15. Plays a role in quality control of translation of mitochondrial outer membrane-localized mRNA. As part of the PINK1-regulated signaling, upon mitochondria damage, ubiquitinates ABCE1 and thereby recruits autophagy receptors to the mitochondrial outer membrane to initiate mitophagy. The sequence is that of CCR4-NOT transcription complex subunit 4 (CNOT4) from Homo sapiens (Human).